Consider the following 431-residue polypeptide: Adenylosuccinate synthetase (431 aa).

GTP contacts are provided by residues 12–18 (GDEGKGK) and 40–42 (GHT). Residue Asp-13 is the Proton acceptor of the active site. Positions 13 and 40 each coordinate Mg(2+). Residues 13-16 (DEGK), 38-41 (NAGH), Thr-130, Arg-144, Gln-225, Thr-240, and Arg-304 each bind IMP. His-41 serves as the catalytic Proton donor. 300–306 (ATTGRPR) contributes to the substrate binding site. Residues Arg-306, 332 to 334 (KLD), and 414 to 416 (SVG) contribute to the GTP site.

Belongs to the adenylosuccinate synthetase family. In terms of assembly, homodimer. Mg(2+) is required as a cofactor.

It is found in the cytoplasm. It catalyses the reaction IMP + L-aspartate + GTP = N(6)-(1,2-dicarboxyethyl)-AMP + GDP + phosphate + 2 H(+). It participates in purine metabolism; AMP biosynthesis via de novo pathway; AMP from IMP: step 1/2. Plays an important role in the de novo pathway of purine nucleotide biosynthesis. Catalyzes the first committed step in the biosynthesis of AMP from IMP. This Geotalea uraniireducens (strain Rf4) (Geobacter uraniireducens) protein is Adenylosuccinate synthetase.